The following is a 475-amino-acid chain: Cytosolic non-specific dipeptidase (475 aa).

K9 bears the N6-acetyllysine mark. Phosphoserine is present on S58. H99 contributes to the Mn(2+) binding site. D101 is a catalytic residue. A Mn(2+)-binding site is contributed by D132. The Proton acceptor role is filled by E166. Substrate-binding positions include 166–167 (EE), D195, H228, T330, R343, S417, and H445. E167 and D195 together coordinate Mn(2+). A Mn(2+)-binding site is contributed by H445.

The protein belongs to the peptidase M20A family. Homodimer. The cofactor is Mn(2+).

It is found in the cytoplasm. The enzyme catalyses Hydrolysis of dipeptides, preferentially hydrophobic dipeptides including prolyl amino acids.. The catalysed reaction is L-threonyl-L-threonine + H2O = 2 L-threonine. It catalyses the reaction L-threonyl-L-serine + H2O = L-threonine + L-serine. It carries out the reaction L-seryl-L-threonine + H2O = L-threonine + L-serine. The enzyme catalyses L-cysteinylglycine + H2O = L-cysteine + glycine. The catalysed reaction is L-alanyl-L-cysteine + H2O = L-cysteine + L-alanine. It catalyses the reaction (S)-lactate + L-phenylalanine = N-[(S)-lactoyl]-L-phenylalanine + H2O. Catalyzes the peptide bond hydrolysis in dipeptides, displaying a non-redundant activity toward threonyl dipeptides. Mediates threonyl dipeptide catabolism in a tissue-specific way. Has high dipeptidase activity toward cysteinylglycine, an intermediate metabolite in glutathione metabolism. Metabolizes N-lactoyl-amino acids, both through hydrolysis to form lactic acid and amino acids, as well as through their formation by reverse proteolysis. Plays a role in the regulation of cell cycle arrest and apoptosis. This chain is Cytosolic non-specific dipeptidase (CNDP2), found in Bos taurus (Bovine).